Here is a 367-residue protein sequence, read N- to C-terminus: Glutamate 5-kinase (367 aa).

ATP is bound at residue lysine 10. The substrate site is built by serine 50, aspartate 137, and asparagine 149. Residues 169–170 and 211–217 contribute to the ATP site; these read TD and TGGMSTK. The region spanning 275–353 is the PUA domain; it reads AGEITVDEGA…QEIDAILGYE (79 aa).

Belongs to the glutamate 5-kinase family.

The protein localises to the cytoplasm. It carries out the reaction L-glutamate + ATP = L-glutamyl 5-phosphate + ADP. Its pathway is amino-acid biosynthesis; L-proline biosynthesis; L-glutamate 5-semialdehyde from L-glutamate: step 1/2. Functionally, catalyzes the transfer of a phosphate group to glutamate to form L-glutamate 5-phosphate. The protein is Glutamate 5-kinase of Escherichia coli O81 (strain ED1a).